A 397-amino-acid chain; its full sequence is CCA-adding enzyme (397 aa).

Residues Gly-8 and Arg-11 each contribute to the ATP site. Gly-8 and Arg-11 together coordinate CTP. 2 residues coordinate Mg(2+): Glu-21 and Asp-23. Arg-91, Arg-137, and Arg-140 together coordinate ATP. Residues Arg-91, Arg-137, and Arg-140 each contribute to the CTP site. Residues 213–324 (NLDAAIATLK…LALFNGCDAW (112 aa)) form the HD domain.

The protein belongs to the tRNA nucleotidyltransferase/poly(A) polymerase family. Bacterial CCA-adding enzyme type 2 subfamily. Requires Mg(2+) as cofactor.

The enzyme catalyses a tRNA precursor + 2 CTP + ATP = a tRNA with a 3' CCA end + 3 diphosphate. The catalysed reaction is a tRNA with a 3' CCA end + 2 CTP + ATP = a tRNA with a 3' CCACCA end + 3 diphosphate. Its function is as follows. Catalyzes the addition and repair of the essential 3'-terminal CCA sequence in tRNAs without using a nucleic acid template. Adds these three nucleotides in the order of C, C, and A to the tRNA nucleotide-73, using CTP and ATP as substrates and producing inorganic pyrophosphate. tRNA 3'-terminal CCA addition is required both for tRNA processing and repair. Also involved in tRNA surveillance by mediating tandem CCA addition to generate a CCACCA at the 3' terminus of unstable tRNAs. While stable tRNAs receive only 3'-terminal CCA, unstable tRNAs are marked with CCACCA and rapidly degraded. In Alteromonas mediterranea (strain DSM 17117 / CIP 110805 / LMG 28347 / Deep ecotype), this protein is CCA-adding enzyme.